A 442-amino-acid polypeptide reads, in one-letter code: 3-phosphoshikimate 1-carboxyvinyltransferase (442 aa).

3-phosphoshikimate-binding residues include lysine 25, serine 26, and arginine 30. Lysine 25 is a phosphoenolpyruvate binding site. Residues glycine 96 and arginine 124 each contribute to the phosphoenolpyruvate site. 6 residues coordinate 3-phosphoshikimate: serine 171, serine 172, glutamine 173, serine 203, aspartate 325, and lysine 352. Glutamine 173 is a binding site for phosphoenolpyruvate. The active-site Proton acceptor is aspartate 325. The phosphoenolpyruvate site is built by arginine 356, arginine 400, and lysine 425.

This sequence belongs to the EPSP synthase family. In terms of assembly, monomer.

Its subcellular location is the cytoplasm. The enzyme catalyses 3-phosphoshikimate + phosphoenolpyruvate = 5-O-(1-carboxyvinyl)-3-phosphoshikimate + phosphate. The protein operates within metabolic intermediate biosynthesis; chorismate biosynthesis; chorismate from D-erythrose 4-phosphate and phosphoenolpyruvate: step 6/7. Catalyzes the transfer of the enolpyruvyl moiety of phosphoenolpyruvate (PEP) to the 5-hydroxyl of shikimate-3-phosphate (S3P) to produce enolpyruvyl shikimate-3-phosphate and inorganic phosphate. The polypeptide is 3-phosphoshikimate 1-carboxyvinyltransferase (Bordetella parapertussis (strain 12822 / ATCC BAA-587 / NCTC 13253)).